A 149-amino-acid polypeptide reads, in one-letter code: Nucleoside diphosphate kinase (149 aa).

ATP is bound by residues lysine 9, phenylalanine 57, arginine 85, threonine 91, arginine 102, and asparagine 112. The active-site Pros-phosphohistidine intermediate is the histidine 115.

This sequence belongs to the NDK family. As to quaternary structure, homotetramer. The cofactor is Mg(2+).

It localises to the cytoplasm. It catalyses the reaction dZDP + ATP = dZTP + ADP. The enzyme catalyses a 2'-deoxyribonucleoside 5'-diphosphate + ATP = a 2'-deoxyribonucleoside 5'-triphosphate + ADP. It carries out the reaction a ribonucleoside 5'-diphosphate + ATP = a ribonucleoside 5'-triphosphate + ADP. It participates in purine metabolism. Major role in the synthesis of nucleoside triphosphates other than ATP. The ATP gamma phosphate is transferred to the NDP beta phosphate via a ping-pong mechanism, using a phosphorylated active-site intermediate. Its function is as follows. (Microbial infection) Catalyzes the phosphorylation of dZDP to dZTP, when the bacterium is infected by a phage that produces the substrate for the synthesis of dZTP (2- amino-2'-deoxyadenosine 5'-triphosphate), which is then used by the phage as a DNA polymerase substrate. The polypeptide is Nucleoside diphosphate kinase (Picosynechococcus sp. (strain ATCC 27264 / PCC 7002 / PR-6) (Agmenellum quadruplicatum)).